The following is a 685-amino-acid chain: DNA ligase (685 aa).

Residues 47 to 51, 96 to 97, and Glu-125 each bind NAD(+); these read DSEYD and SL. Lys-127 acts as the N6-AMP-lysine intermediate in catalysis. 4 residues coordinate NAD(+): Arg-148, Glu-185, Lys-304, and Lys-328. Cys-422, Cys-425, Cys-440, and Cys-446 together coordinate Zn(2+). The region spanning 605-685 is the BRCT domain; sequence ADAQPLKGQT…ELLALLAANA (81 aa).

The protein belongs to the NAD-dependent DNA ligase family. LigA subfamily. It depends on Mg(2+) as a cofactor. Requires Mn(2+) as cofactor.

It carries out the reaction NAD(+) + (deoxyribonucleotide)n-3'-hydroxyl + 5'-phospho-(deoxyribonucleotide)m = (deoxyribonucleotide)n+m + AMP + beta-nicotinamide D-nucleotide.. Its function is as follows. DNA ligase that catalyzes the formation of phosphodiester linkages between 5'-phosphoryl and 3'-hydroxyl groups in double-stranded DNA using NAD as a coenzyme and as the energy source for the reaction. It is essential for DNA replication and repair of damaged DNA. This Shewanella baltica (strain OS195) protein is DNA ligase.